A 136-amino-acid chain; its full sequence is T-cell receptor alpha chain constant (136 aa).

One can recognise an Ig-like C1-type domain in the interval 19 to 103 (STLCLFTDFD…LTEKSFETDM (85 aa)). C22 and C72 are disulfide-bonded. 3 N-linked (GlcNAc...) asparagine glycosylation sites follow: N66, N80, and N109. The segment at 90–111 (CDATLTEKSFETDMNLNFQNLS) is connecting peptide. A helical membrane pass occupies residues 111–131 (SVMGLRILLLKVAGFNLLMTL). Residues 132-136 (RLWSS) are Cytoplasmic-facing.

Alpha-beta TR is a heterodimer composed of an alpha and beta chain; disulfide-linked. The alpha-beta TR is associated with the transmembrane signaling CD3 coreceptor proteins to form the TR-CD3 (TcR or TCR). The assembly of alpha-beta TR heterodimers with CD3 occurs in the endoplasmic reticulum where a single alpha-beta TR heterodimer associates with one CD3D-CD3E heterodimer, one CD3G-CD3E heterodimer and one CD247 homodimer forming a stable octameric structure. CD3D-CD3E and CD3G-CD3E heterodimers preferentially associate with TR alpha and TR beta chains, respectively. The association of the CD247 homodimer is the last step of TcR assembly in the endoplasmic reticulum and is required for transport to the cell surface.

The protein resides in the cell membrane. Constant region of T cell receptor (TR) alpha chain. Alpha-beta T cell receptors are antigen specific receptors which are essential to the immune response and are present on the cell surface of T lymphocytes. Recognize peptide-major histocompatibility (MH) (pMH) complexes that are displayed by antigen presenting cells (APC), a prerequisite for efficient T cell adaptive immunity against pathogens. Binding of alpha-beta TR to pMH complex initiates TR-CD3 clustering on the cell surface and intracellular activation of LCK that phosphorylates the ITAM motifs of CD3G, CD3D, CD3E and CD247 enabling the recruitment of ZAP70. In turn, ZAP70 phosphorylates LAT, which recruits numerous signaling molecules to form the LAT signalosome. The LAT signalosome propagates signal branching to three major signaling pathways, the calcium, the mitogen-activated protein kinase (MAPK) kinase and the nuclear factor NF-kappa-B (NF-kB) pathways, leading to the mobilization of transcription factors that are critical for gene expression and essential for T cell growth and differentiation. The T cell repertoire is generated in the thymus, by V-(D)-J rearrangement. This repertoire is then shaped by intrathymic selection events to generate a peripheral T cell pool of self-MH restricted, non-autoaggressive T cells. Post-thymic interaction of alpha-beta TR with the pMH complexes shapes TR structural and functional avidity. In Mus musculus (Mouse), this protein is T-cell receptor alpha chain constant.